A 230-amino-acid chain; its full sequence is Orotidine 5'-phosphate decarboxylase (230 aa).

Residues Asp-10, Lys-31, 58–67 (DLKLHDIPNT), Thr-117, Arg-179, Gln-188, Gly-208, and Arg-209 contribute to the substrate site. Catalysis depends on Lys-60, which acts as the Proton donor.

The protein belongs to the OMP decarboxylase family. Type 1 subfamily. As to quaternary structure, homodimer.

It catalyses the reaction orotidine 5'-phosphate + H(+) = UMP + CO2. The protein operates within pyrimidine metabolism; UMP biosynthesis via de novo pathway; UMP from orotate: step 2/2. In terms of biological role, catalyzes the decarboxylation of orotidine 5'-monophosphate (OMP) to uridine 5'-monophosphate (UMP). This is Orotidine 5'-phosphate decarboxylase from Staphylococcus aureus (strain USA300).